The primary structure comprises 599 residues: Elongation factor 4 (599 aa).

One can recognise a tr-type G domain in the interval 2 to 184 (KNIRNFSIIA…RLVRDIPPPE (183 aa)). Residues 14 to 19 (DHGKST) and 131 to 134 (NKID) each bind GTP.

Belongs to the TRAFAC class translation factor GTPase superfamily. Classic translation factor GTPase family. LepA subfamily.

It localises to the cell inner membrane. The enzyme catalyses GTP + H2O = GDP + phosphate + H(+). Required for accurate and efficient protein synthesis under certain stress conditions. May act as a fidelity factor of the translation reaction, by catalyzing a one-codon backward translocation of tRNAs on improperly translocated ribosomes. Back-translocation proceeds from a post-translocation (POST) complex to a pre-translocation (PRE) complex, thus giving elongation factor G a second chance to translocate the tRNAs correctly. Binds to ribosomes in a GTP-dependent manner. The sequence is that of Elongation factor 4 from Cronobacter sakazakii (strain ATCC BAA-894) (Enterobacter sakazakii).